The sequence spans 89 residues: NADH-ubiquinone oxidoreductase chain 4L (89 aa).

A run of 3 helical transmembrane segments spans residues 1 to 21 (MNITLILFLIGILGFVLNRKN), 22 to 42 (IILMLISIEIMLLAITFLILV), and 57 to 77 (IYIIVVAGAESAIGLGILVAF).

It belongs to the complex I subunit 4L family.

The protein localises to the mitochondrion membrane. It catalyses the reaction a ubiquinone + NADH + 5 H(+)(in) = a ubiquinol + NAD(+) + 4 H(+)(out). Its function is as follows. Core subunit of the mitochondrial membrane respiratory chain NADH dehydrogenase (Complex I) that is believed to belong to the minimal assembly required for catalysis. Complex I functions in the transfer of electrons from NADH to the respiratory chain. The immediate electron acceptor for the enzyme is believed to be ubiquinone. The sequence is that of NADH-ubiquinone oxidoreductase chain 4L (ND4L) from Podospora anserina (strain S / ATCC MYA-4624 / DSM 980 / FGSC 10383) (Pleurage anserina).